The chain runs to 327 residues: Methionyl-tRNA formyltransferase (327 aa).

(6S)-5,6,7,8-tetrahydrofolate is bound at residue 121 to 124; it reads SLLP.

This sequence belongs to the Fmt family.

It carries out the reaction L-methionyl-tRNA(fMet) + (6R)-10-formyltetrahydrofolate = N-formyl-L-methionyl-tRNA(fMet) + (6S)-5,6,7,8-tetrahydrofolate + H(+). Its function is as follows. Attaches a formyl group to the free amino group of methionyl-tRNA(fMet). The formyl group appears to play a dual role in the initiator identity of N-formylmethionyl-tRNA by promoting its recognition by IF2 and preventing the misappropriation of this tRNA by the elongation apparatus. The protein is Methionyl-tRNA formyltransferase of Burkholderia mallei (strain ATCC 23344).